The primary structure comprises 321 residues: Lipoyl synthase (321 aa).

Residues cysteine 68, cysteine 73, cysteine 79, cysteine 94, cysteine 98, cysteine 101, and serine 308 each contribute to the [4Fe-4S] cluster site. One can recognise a Radical SAM core domain in the interval 80–297 (FNHGTATFMI…KVLADELGFT (218 aa)).

The protein belongs to the radical SAM superfamily. Lipoyl synthase family. It depends on [4Fe-4S] cluster as a cofactor.

It is found in the cytoplasm. The catalysed reaction is [[Fe-S] cluster scaffold protein carrying a second [4Fe-4S](2+) cluster] + N(6)-octanoyl-L-lysyl-[protein] + 2 oxidized [2Fe-2S]-[ferredoxin] + 2 S-adenosyl-L-methionine + 4 H(+) = [[Fe-S] cluster scaffold protein] + N(6)-[(R)-dihydrolipoyl]-L-lysyl-[protein] + 4 Fe(3+) + 2 hydrogen sulfide + 2 5'-deoxyadenosine + 2 L-methionine + 2 reduced [2Fe-2S]-[ferredoxin]. It functions in the pathway protein modification; protein lipoylation via endogenous pathway; protein N(6)-(lipoyl)lysine from octanoyl-[acyl-carrier-protein]: step 2/2. Functionally, catalyzes the radical-mediated insertion of two sulfur atoms into the C-6 and C-8 positions of the octanoyl moiety bound to the lipoyl domains of lipoate-dependent enzymes, thereby converting the octanoylated domains into lipoylated derivatives. The chain is Lipoyl synthase from Shewanella sp. (strain ANA-3).